A 732-amino-acid chain; its full sequence is Elongation factor 2 (732 aa).

A tr-type G domain is found at 19-260 (ERIRNIGIAA…MVVRHLPSPI (242 aa)). GTP is bound by residues 28-35 (AHIDHGKT), 94-98 (DTPGH), and 148-151 (NKVD). Histidine 597 is modified (diphthamide).

Belongs to the TRAFAC class translation factor GTPase superfamily. Classic translation factor GTPase family. EF-G/EF-2 subfamily.

The protein resides in the cytoplasm. In terms of biological role, catalyzes the GTP-dependent ribosomal translocation step during translation elongation. During this step, the ribosome changes from the pre-translocational (PRE) to the post-translocational (POST) state as the newly formed A-site-bound peptidyl-tRNA and P-site-bound deacylated tRNA move to the P and E sites, respectively. Catalyzes the coordinated movement of the two tRNA molecules, the mRNA and conformational changes in the ribosome. The sequence is that of Elongation factor 2 (fusA) from Pyrococcus furiosus (strain ATCC 43587 / DSM 3638 / JCM 8422 / Vc1).